A 308-amino-acid chain; its full sequence is GMP synthase [glutamine-hydrolyzing] subunit B (308 aa).

The GMPS ATP-PPase domain occupies 1 to 185 (MNWEKFVEEK…LGLPEKIYNR (185 aa)). ATP is bound at residue 28-34 (SGGVDSS).

In terms of assembly, heterodimer composed of a glutamine amidotransferase subunit (A) and a GMP-binding subunit (B).

It catalyses the reaction XMP + L-glutamine + ATP + H2O = GMP + L-glutamate + AMP + diphosphate + 2 H(+). Its pathway is purine metabolism; GMP biosynthesis; GMP from XMP (L-Gln route): step 1/1. Its function is as follows. Catalyzes the synthesis of GMP from XMP. The polypeptide is GMP synthase [glutamine-hydrolyzing] subunit B (guaAB) (Pyrococcus abyssi (strain GE5 / Orsay)).